The primary structure comprises 432 residues: Adenylosuccinate synthetase (432 aa).

GTP contacts are provided by residues 12–18 (GDEGKGK) and 40–42 (GHT). The Proton acceptor role is filled by Asp13. Residues Asp13 and Gly40 each contribute to the Mg(2+) site. IMP contacts are provided by residues 13–16 (DEGK), 38–41 (NAGH), Thr129, Arg143, Gln224, Thr239, and Arg303. The active-site Proton donor is the His41. 299 to 305 (VTTGRRR) provides a ligand contact to substrate. Residues Arg305, 331-333 (KLD), and 413-415 (GVG) each bind GTP.

This sequence belongs to the adenylosuccinate synthetase family. As to quaternary structure, homodimer. Mg(2+) serves as cofactor.

It localises to the cytoplasm. It carries out the reaction IMP + L-aspartate + GTP = N(6)-(1,2-dicarboxyethyl)-AMP + GDP + phosphate + 2 H(+). It functions in the pathway purine metabolism; AMP biosynthesis via de novo pathway; AMP from IMP: step 1/2. In terms of biological role, plays an important role in the de novo pathway of purine nucleotide biosynthesis. Catalyzes the first committed step in the biosynthesis of AMP from IMP. This chain is Adenylosuccinate synthetase, found in Mycolicibacterium paratuberculosis (strain ATCC BAA-968 / K-10) (Mycobacterium paratuberculosis).